Reading from the N-terminus, the 638-residue chain is Growth hormone receptor (638 aa).

A signal peptide spans 1 to 18 (MDLWQLLLTVALAGSSDA). Residues 19–264 (FSGSEATPAT…SPFTCEEDFR (246 aa)) lie on the Extracellular side of the membrane. Positions 30–51 (GRASESVQRVHPGLGTNSSGKP) are disordered. N-linked (GlcNAc...) asparagine glycosylation is present at Asn-46. Disulfide bonds link Cys-56/Cys-66 and Cys-101/Cys-112. Asn-115 carries N-linked (GlcNAc...) asparagine glycosylation. The cysteines at positions 126 and 140 are disulfide-linked. The Fibronectin type-III domain maps to 151 to 254 (PPIGLNWTLL…EVLYVTLPQM (104 aa)). Residues Asn-156, Asn-161, and Asn-200 are each glycosylated (N-linked (GlcNAc...) asparagine). A WSXWS motif motif is present at residues 240–244 (YGEFS). The segment at 260 to 262 (EED) is required for ADAM17-mediated proteolysis. A helical transmembrane segment spans residues 265–288 (FPWFLIIIFGIFGLTVMLFVFIFS). The Cytoplasmic portion of the chain corresponds to 289–638 (KQQRIKMLIL…STDQLNKILP (350 aa)). The interval 294–379 (KMLILPPVPV…HQKSLSVLAA (86 aa)) is required for JAK2 binding. Residues 297 to 305 (ILPPVPVPK) carry the Box 1 motif motif. The UbE motif motif lies at 340-349 (DSWVEFIELD). Ser-341 is modified (phosphoserine). Tyr-487 carries the post-translational modification Phosphotyrosine. A disordered region spans residues 573–592 (TTTAERSGTAEDAPGSEMPV). At Tyr-595 the chain carries Phosphotyrosine.

This sequence belongs to the type I cytokine receptor family. Type 1 subfamily. On growth hormone (GH) binding, forms homodimers and binds JAK2 via a box 1-containing domain. Post-translationally, the soluble form (GHBP) is produced by phorbol ester-promoted proteolytic cleavage at the cell surface (shedding) by ADAM17/TACE. Shedding is inhibited by growth hormone (GH) binding to the receptor probably due to a conformational change in GHR rendering the receptor inaccessible to ADAM17. On GH binding, phosphorylated on tyrosine residues in the cytoplasmic domain by JAK2. In terms of processing, ubiquitinated by the ECS(SOCS2) complex following ligand-binding and phosphorylation by JAK2, leading to its degradation by the proteasome. Regulation by the ECS(SOCS2) complex acts as a negative feedback loop of growth hormone receptor signaling. Ubiquitination is not sufficient for GHR internalization.

Its subcellular location is the cell membrane. It is found in the secreted. Its function is as follows. Receptor for pituitary gland growth hormone involved in regulating postnatal body growth. On ligand binding, couples to, and activates the JAK2/STAT5 pathway. Functionally, the soluble form acts as a reservoir of growth hormone in plasma and may be a modulator/inhibitor of GH signaling. This is Growth hormone receptor from Oryctolagus cuniculus (Rabbit).